We begin with the raw amino-acid sequence, 29 residues long: Brevinin-2Ra (29 aa).

Cys-23 and Cys-29 are disulfide-bonded.

As to expression, expressed by the skin glands.

It is found in the secreted. Antimicrobial peptide. The sequence is that of Brevinin-2Ra from Pelophylax ridibundus (Marsh frog).